The primary structure comprises 122 residues: Large ribosomal subunit protein uL14 (122 aa).

It belongs to the universal ribosomal protein uL14 family. Part of the 50S ribosomal subunit. Forms a cluster with proteins L3 and L19. In the 70S ribosome, L14 and L19 interact and together make contacts with the 16S rRNA in bridges B5 and B8.

Functionally, binds to 23S rRNA. Forms part of two intersubunit bridges in the 70S ribosome. The chain is Large ribosomal subunit protein uL14 from Streptomyces avermitilis (strain ATCC 31267 / DSM 46492 / JCM 5070 / NBRC 14893 / NCIMB 12804 / NRRL 8165 / MA-4680).